The primary structure comprises 395 residues: Elongation factor Tu (395 aa).

In terms of domain architecture, tr-type G spans 10–204; it reads KPHLNIGTIG…AVDNWIEEPV (195 aa). The G1 stretch occupies residues 19 to 26; it reads GHVDHGKT. 19–26 lines the GTP pocket; that stretch reads GHVDHGKT. Thr-26 serves as a coordination point for Mg(2+). Positions 60 to 64 are G2; sequence GITIN. A G3 region spans residues 81-84; sequence DCPG. Residues 81–85 and 136–139 each bind GTP; these read DCPGH and NKVD. The G4 stretch occupies residues 136 to 139; sequence NKVD. Residues 174–176 form a G5 region; it reads SAL.

It belongs to the TRAFAC class translation factor GTPase superfamily. Classic translation factor GTPase family. EF-Tu/EF-1A subfamily. In terms of assembly, monomer.

It localises to the cytoplasm. The enzyme catalyses GTP + H2O = GDP + phosphate + H(+). In terms of biological role, GTP hydrolase that promotes the GTP-dependent binding of aminoacyl-tRNA to the A-site of ribosomes during protein biosynthesis. In Flavobacterium johnsoniae (strain ATCC 17061 / DSM 2064 / JCM 8514 / BCRC 14874 / CCUG 350202 / NBRC 14942 / NCIMB 11054 / UW101) (Cytophaga johnsonae), this protein is Elongation factor Tu.